The chain runs to 502 residues: Mannitol 2-dehydrogenase (502 aa).

37-48 provides a ligand contact to NAD(+); that stretch reads IVHIGVGGFHRA.

It belongs to the mannitol dehydrogenase family. As to quaternary structure, monomer.

The catalysed reaction is D-mannitol + NAD(+) = D-fructose + NADH + H(+). In terms of biological role, catalyzes the NAD(H)-dependent interconversion of D-fructose and D-mannitol in the mannitol metabolic pathway. The chain is Mannitol 2-dehydrogenase from Aspergillus clavatus (strain ATCC 1007 / CBS 513.65 / DSM 816 / NCTC 3887 / NRRL 1 / QM 1276 / 107).